Reading from the N-terminus, the 1496-residue chain is DNA-directed RNA polymerase subunit beta' (1496 aa).

Zn(2+) contacts are provided by Cys70, Cys72, Cys85, and Cys88. Mg(2+) is bound by residues Asp461, Asp463, and Asp465. Residues Cys908, Cys982, Cys989, and Cys992 each contribute to the Zn(2+) site. The tract at residues 1467–1496 (DKDMQVEGESEVPAIPPVAEGSAPEAPPAE) is disordered.

The protein belongs to the RNA polymerase beta' chain family. The RNAP catalytic core consists of 2 alpha, 1 beta, 1 beta' and 1 omega subunit. When a sigma factor is associated with the core the holoenzyme is formed, which can initiate transcription. It depends on Mg(2+) as a cofactor. Zn(2+) is required as a cofactor.

The enzyme catalyses RNA(n) + a ribonucleoside 5'-triphosphate = RNA(n+1) + diphosphate. In terms of biological role, DNA-dependent RNA polymerase catalyzes the transcription of DNA into RNA using the four ribonucleoside triphosphates as substrates. This chain is DNA-directed RNA polymerase subunit beta', found in Paramagnetospirillum magneticum (strain ATCC 700264 / AMB-1) (Magnetospirillum magneticum).